Reading from the N-terminus, the 536-residue chain is Peptide chain release factor 3 (536 aa).

The region spanning 13–281 is the tr-type G domain; the sequence is SHRRTFAIIS…ALIDWAPAPQ (269 aa). GTP is bound by residues 22-29, 90-94, and 144-147; these read SHPDAGKT, DTPGH, and NKCD.

The protein belongs to the TRAFAC class translation factor GTPase superfamily. Classic translation factor GTPase family. PrfC subfamily.

The protein resides in the cytoplasm. In terms of biological role, increases the formation of ribosomal termination complexes and stimulates activities of RF-1 and RF-2. It binds guanine nucleotides and has strong preference for UGA stop codons. It may interact directly with the ribosome. The stimulation of RF-1 and RF-2 is significantly reduced by GTP and GDP, but not by GMP. This Chromobacterium violaceum (strain ATCC 12472 / DSM 30191 / JCM 1249 / CCUG 213 / NBRC 12614 / NCIMB 9131 / NCTC 9757 / MK) protein is Peptide chain release factor 3.